The following is a 156-amino-acid chain: Movement protein P17 (156 aa).

The segment at 38-54 (AEDVEEEAIAAQEELEF) is homodimerization. The interval 57–156 (DEAQARHSCL…RAAPKLIKRG (100 aa)) is RNA-binding. 4 positions are modified to phosphoserine: Ser71, Ser79, Ser137, and Ser140. Positions 106–156 (ASYFSSSARPLPPPPAPSLMSWTPIAKYHPSSPTSTSSKLRRAAPKLIKRG) are disordered. A compositionally biased stretch (basic residues) spans 144–156 (KLRRAAPKLIKRG).

Belongs to the polerovirus movement protein family. As to quaternary structure, homodimer. Expressed as a nonphosphorylated 20kDa form and a phosphorylated 22kDa form. Phosphorylated by a host PKC-related kinase. Serine phosphorylation is required for plamodesma targeting.

The protein resides in the host cell junction. It is found in the host plasmodesma. It localises to the host chloroplast envelope. Its subcellular location is the host Golgi apparatus. The protein localises to the host mitochondrion outer membrane. Functionally, together with movement protein P3a, facilitates long-distance movement of virions in host. Transports viral genome to neighboring plant cells directly through plasmosdesmata, without any budding. The movement protein allows efficient cell to cell propagation, by bypassing the host cell wall barrier. Binds ssRNA. This is Movement protein P17 from Solanum tuberosum (Potato).